We begin with the raw amino-acid sequence, 105 residues long: UPF0145 protein Sala_0338 (105 aa).

It belongs to the UPF0145 family.

In Sphingopyxis alaskensis (strain DSM 13593 / LMG 18877 / RB2256) (Sphingomonas alaskensis), this protein is UPF0145 protein Sala_0338.